Reading from the N-terminus, the 241-residue chain is MPLLAVNVDHVATIRQARLAKSPDPVAAAALAELGGARAIIVHLREDRRHIGDRDVHVLRETIKTRLHLEMAATEEMLGIALKRKPDMVCLVPEKRQELTTEGGLGVAGREAELAAYVAKLAEAGIPTSLFIDPDPRQIEASKAVGAAYVELHTGAFADAATPAARQKELDRLLAAIPLAKSQGLGVNLGHGLDYDNIYAFKDTPGVSEYSIGHSIVARAVLTGMVEAVSTMCAIIDGFPD.

Residue asparagine 7 participates in 3-amino-2-oxopropyl phosphate binding. 9–10 (DH) is a binding site for 1-deoxy-D-xylulose 5-phosphate. Arginine 18 provides a ligand contact to 3-amino-2-oxopropyl phosphate. The Proton acceptor role is filled by histidine 43. The 1-deoxy-D-xylulose 5-phosphate site is built by arginine 45 and histidine 50. Glutamate 70 acts as the Proton acceptor in catalysis. 1-deoxy-D-xylulose 5-phosphate is bound at residue threonine 100. The active-site Proton donor is histidine 191. Residues glycine 192 and 213-214 (GH) contribute to the 3-amino-2-oxopropyl phosphate site.

Belongs to the PNP synthase family. As to quaternary structure, homooctamer; tetramer of dimers.

The protein resides in the cytoplasm. It catalyses the reaction 3-amino-2-oxopropyl phosphate + 1-deoxy-D-xylulose 5-phosphate = pyridoxine 5'-phosphate + phosphate + 2 H2O + H(+). It participates in cofactor biosynthesis; pyridoxine 5'-phosphate biosynthesis; pyridoxine 5'-phosphate from D-erythrose 4-phosphate: step 5/5. Its function is as follows. Catalyzes the complicated ring closure reaction between the two acyclic compounds 1-deoxy-D-xylulose-5-phosphate (DXP) and 3-amino-2-oxopropyl phosphate (1-amino-acetone-3-phosphate or AAP) to form pyridoxine 5'-phosphate (PNP) and inorganic phosphate. This chain is Pyridoxine 5'-phosphate synthase, found in Solidesulfovibrio magneticus (strain ATCC 700980 / DSM 13731 / RS-1) (Desulfovibrio magneticus).